The sequence spans 72 residues: Translation initiation factor IF-1 (72 aa).

Residues 1-72 enclose the S1-like domain; sequence MSKEEAIEVE…TRGRITYRAK (72 aa).

The protein belongs to the IF-1 family. In terms of assembly, component of the 30S ribosomal translation pre-initiation complex which assembles on the 30S ribosome in the order IF-2 and IF-3, IF-1 and N-formylmethionyl-tRNA(fMet); mRNA recruitment can occur at any time during PIC assembly.

It is found in the cytoplasm. In terms of biological role, one of the essential components for the initiation of protein synthesis. Stabilizes the binding of IF-2 and IF-3 on the 30S subunit to which N-formylmethionyl-tRNA(fMet) subsequently binds. Helps modulate mRNA selection, yielding the 30S pre-initiation complex (PIC). Upon addition of the 50S ribosomal subunit IF-1, IF-2 and IF-3 are released leaving the mature 70S translation initiation complex. In Geotalea uraniireducens (strain Rf4) (Geobacter uraniireducens), this protein is Translation initiation factor IF-1.